We begin with the raw amino-acid sequence, 297 residues long: Protoheme IX farnesyltransferase 1 (297 aa).

The next 9 membrane-spanning stretches (helical) occupy residues 23 to 43 (VVVLMLITSLVGMFLATRAGV), 45 to 65 (WSVLLFGNLGIALCAGGAAAV), 93 to 113 (LPALLFALALALLGMALLLMF), 117 to 137 (LTAWLTLASLLGYAVLYTGFL), 145 to 165 (IVIGGLAGAAPPLLGWVAVSG), 171 to 191 (PLLLVLIIFAWTPPHFWALAI), 216 to 236 (LHILLYTLILLAVTLLPYAIH), 241 to 261 (LYLVCALALGLRFLQWAWVLY), and 277 to 297 (IGYLFALFIALLVDHYLLLNL).

It belongs to the UbiA prenyltransferase family. Protoheme IX farnesyltransferase subfamily.

The protein localises to the cell inner membrane. The catalysed reaction is heme b + (2E,6E)-farnesyl diphosphate + H2O = Fe(II)-heme o + diphosphate. It participates in porphyrin-containing compound metabolism; heme O biosynthesis; heme O from protoheme: step 1/1. Functionally, converts heme B (protoheme IX) to heme O by substitution of the vinyl group on carbon 2 of heme B porphyrin ring with a hydroxyethyl farnesyl side group. The chain is Protoheme IX farnesyltransferase 1 from Pseudomonas putida (strain W619).